The chain runs to 287 residues: 2-dehydro-3-deoxyphosphooctonate aldolase (287 aa).

This sequence belongs to the KdsA family.

Its subcellular location is the cytoplasm. The enzyme catalyses D-arabinose 5-phosphate + phosphoenolpyruvate + H2O = 3-deoxy-alpha-D-manno-2-octulosonate-8-phosphate + phosphate. The protein operates within carbohydrate biosynthesis; 3-deoxy-D-manno-octulosonate biosynthesis; 3-deoxy-D-manno-octulosonate from D-ribulose 5-phosphate: step 2/3. Its pathway is bacterial outer membrane biogenesis; lipopolysaccharide biosynthesis. The protein is 2-dehydro-3-deoxyphosphooctonate aldolase of Nitrobacter hamburgensis (strain DSM 10229 / NCIMB 13809 / X14).